A 1948-amino-acid polypeptide reads, in one-letter code: Receptor-type tyrosine-protein phosphatase S (1948 aa).

The first 29 residues, 1–29 (MAPTWGPGMVSVVGPMGLLVVLLVGGCAA), serve as a signal peptide directing secretion. Over 30-1282 (EEPPRFIKEP…PQPIVDGEEG (1253 aa)) the chain is Extracellular. 3 Ig-like C2-type domains span residues 33 to 123 (PRFI…AKLT), 135 to 233 (PNID…ANLY), and 245 to 327 (PRFS…AQIT). 2 disulfide bridges follow: Cys-54–Cys-107 and Cys-156–Cys-216. The segment at 68-72 (KKGKK) is important for binding to glycosaminoglycan chains. 2 N-linked (GlcNAc...) asparagine glycosylation sites follow: Asn-263 and Asn-308. Cysteines 266 and 311 form a disulfide. Fibronectin type-III domains lie at 334-424 (APGT…TGEQ), 429-523 (APRN…TQQG), 527-616 (QPMN…TLQS), 621-718 (PPQD…TDED), 723-831 (PPRK…TKGA), 832-930 (VLGR…TPRG), 931-1033 (HPQI…FLRD), and 1036-1120 (SPKN…TAFN). The tract at residues 700–724 (TEVGPGPESSPVVVRTDEDVPSAPP) is disordered. Over residues 701 to 713 (EVGPGPESSPVVV) the composition is skewed to low complexity. An N-linked (GlcNAc...) asparagine glycan is attached at Asn-733. N-linked (GlcNAc...) asparagine glycosylation occurs at Asn-940. The helical transmembrane segment at 1283-1303 (LIWVIGPVLAVVFIICIVIAI) threads the bilayer. At 1304–1948 (LLYKNKPDSK…YLGSFDHYAT (645 aa)) the chain is on the cytoplasmic side. Basic and acidic residues-rich tracts occupy residues 1311–1321 (DSKRKDSEPRT) and 1331–1340 (APHHPKDPVE). The interval 1311–1340 (DSKRKDSEPRTKCLLNNADLAPHHPKDPVE) is disordered. Tyrosine-protein phosphatase domains are found at residues 1393-1648 (LSQE…LLEA) and 1680-1939 (MELE…ALEY). Residues Asp-1557, 1589 to 1595 (CSAGVGR), and Gln-1633 contribute to the substrate site. Cys-1589 acts as the Phosphocysteine intermediate in catalysis. The active-site Phosphocysteine intermediate is Cys-1880.

This sequence belongs to the protein-tyrosine phosphatase family. Receptor class 2A subfamily. As to quaternary structure, binding to large heparan sulfate proteoglycan structures promotes oligomerization. Binding to chondroitin sulfate proteoglycan does not lead to oligomerization. Interacts (via Ig-like domains) with NTRK3. Interacts (via Ig-like domains) with NTRK1, but does not form detectable complexes with NTRK2. Interacts with PPFIA1, PPFIA2 and PPFIA3. Post-translationally, a cleavage occurs, separating the extracellular domain from the transmembrane segment. This process called 'ectodomain shedding' is thought to be involved in receptor desensitization, signal transduction and/or membrane localization. Detected in peripheral blood plasmacytoid dendritic cells (at protein level). Detected in all tissues tested except for placenta and liver. Detected in peripheral blood plasmacytoid dendritic cells.

It localises to the cell membrane. It is found in the cell projection. The protein localises to the axon. Its subcellular location is the perikaryon. The protein resides in the cytoplasmic vesicle. It localises to the secretory vesicle. It is found in the synaptic vesicle membrane. The protein localises to the synapse. Its subcellular location is the synaptosome. The protein resides in the postsynaptic density. It localises to the neuron projection. It is found in the growth cone. The catalysed reaction is O-phospho-L-tyrosyl-[protein] + H2O = L-tyrosyl-[protein] + phosphate. In terms of biological role, cell surface receptor that binds to glycosaminoglycans, including chondroitin sulfate proteoglycans and heparan sulfate proteoglycan. Binding to chondroitin sulfate and heparan sulfate proteoglycans has opposite effects on PTPRS oligomerization and regulation of neurite outgrowth. Contributes to the inhibition of neurite and axonal outgrowth by chondroitin sulfate proteoglycans, also after nerve transection. Plays a role in stimulating neurite outgrowth in response to the heparan sulfate proteoglycan GPC2. Required for normal brain development, especially for normal development of the pituitary gland and the olfactory bulb. Functions as a tyrosine phosphatase. Mediates dephosphorylation of NTRK1, NTRK2 and NTRK3. Plays a role in down-regulation of signaling cascades that lead to the activation of Akt and MAP kinases. Down-regulates TLR9-mediated activation of NF-kappa-B, as well as production of TNF, interferon alpha and interferon beta. The chain is Receptor-type tyrosine-protein phosphatase S (PTPRS) from Homo sapiens (Human).